The following is an 879-amino-acid chain: Alanine--tRNA ligase (879 aa).

Zn(2+)-binding residues include histidine 566, histidine 570, cysteine 668, and histidine 672.

The protein belongs to the class-II aminoacyl-tRNA synthetase family. Requires Zn(2+) as cofactor.

The protein localises to the cytoplasm. It catalyses the reaction tRNA(Ala) + L-alanine + ATP = L-alanyl-tRNA(Ala) + AMP + diphosphate. Its function is as follows. Catalyzes the attachment of alanine to tRNA(Ala) in a two-step reaction: alanine is first activated by ATP to form Ala-AMP and then transferred to the acceptor end of tRNA(Ala). Also edits incorrectly charged Ser-tRNA(Ala) and Gly-tRNA(Ala) via its editing domain. The protein is Alanine--tRNA ligase of Clostridium kluyveri (strain ATCC 8527 / DSM 555 / NBRC 12016 / NCIMB 10680 / K1).